Consider the following 694-residue polypeptide: Two-component response regulator ORR25 (694 aa).

Positions 17–132 (RVLAVDDSPV…DIQNIWQHVW (116 aa)) constitute a Response regulatory domain. Asp-68 carries the 4-aspartylphosphate modification. Positions 183-242 (TLKRQRVVWTPELHRDFVIAVHELGVDRAVPRKILRMMKVDYMTRENIASHLQKYRLYLK) constitute an HTH myb-type domain. A DNA-binding region (H-T-H motif) is located at residues 213 to 238 (PRKILRMMKVDYMTRENIASHLQKYR). The interval 326–349 (VGHGGSPGNNPVFQPLQNSSNARK) is disordered. The span at 333–347 (GNNPVFQPLQNSSNA) shows a compositional bias: polar residues.

The protein belongs to the ARR family. Type-B subfamily. Post-translationally, two-component system major event consists of a His-to-Asp phosphorelay between a sensor histidine kinase (HK) and a response regulator (RR). In plants, the His-to-Asp phosphorelay involves an additional intermediate named Histidine-containing phosphotransfer protein (HPt). This multistep phosphorelay consists of a His-Asp-His-Asp sequential transfer of a phosphate group between first a His and an Asp of the HK protein, followed by the transfer to a conserved His of the HPt protein and finally the transfer to an Asp in the receiver domain of the RR protein.

It localises to the nucleus. Its function is as follows. Transcriptional activator that binds specific DNA sequence. Functions as a response regulator involved in His-to-Asp phosphorelay signal transduction system. Phosphorylation of the Asp residue in the receiver domain activates the ability of the protein to promote the transcription of target genes. May directly activate some type-A response regulators in response to cytokinins. The protein is Two-component response regulator ORR25 of Oryza sativa subsp. japonica (Rice).